The chain runs to 355 residues: UDP-N-acetylglucosamine--N-acetylmuramyl-(pentapeptide) pyrophosphoryl-undecaprenol N-acetylglucosamine transferase (355 aa).

UDP-N-acetyl-alpha-D-glucosamine is bound by residues 15–17 (TGG), N127, R163, S191, I244, 263–268 (ALTVSE), and Q288.

It belongs to the glycosyltransferase 28 family. MurG subfamily.

The protein localises to the cell inner membrane. It catalyses the reaction di-trans,octa-cis-undecaprenyl diphospho-N-acetyl-alpha-D-muramoyl-L-alanyl-D-glutamyl-meso-2,6-diaminopimeloyl-D-alanyl-D-alanine + UDP-N-acetyl-alpha-D-glucosamine = di-trans,octa-cis-undecaprenyl diphospho-[N-acetyl-alpha-D-glucosaminyl-(1-&gt;4)]-N-acetyl-alpha-D-muramoyl-L-alanyl-D-glutamyl-meso-2,6-diaminopimeloyl-D-alanyl-D-alanine + UDP + H(+). The protein operates within cell wall biogenesis; peptidoglycan biosynthesis. Its function is as follows. Cell wall formation. Catalyzes the transfer of a GlcNAc subunit on undecaprenyl-pyrophosphoryl-MurNAc-pentapeptide (lipid intermediate I) to form undecaprenyl-pyrophosphoryl-MurNAc-(pentapeptide)GlcNAc (lipid intermediate II). The chain is UDP-N-acetylglucosamine--N-acetylmuramyl-(pentapeptide) pyrophosphoryl-undecaprenol N-acetylglucosamine transferase from Shigella flexneri serotype 5b (strain 8401).